Here is a 327-residue protein sequence, read N- to C-terminus: Ubiquinone biosynthesis O-methyltransferase, mitochondrial (327 aa).

S-adenosyl-L-methionine is bound by residues R79, G142, D165, and F210. E211, E214, and H215 together coordinate Mg(2+).

This sequence belongs to the class I-like SAM-binding methyltransferase superfamily. UbiG/COQ3 family. As to quaternary structure, component of a multi-subunit COQ enzyme complex, composed of at least COQ3, COQ4, COQ5, COQ6, COQ7 and COQ9. Mg(2+) serves as cofactor.

The protein resides in the mitochondrion inner membrane. It carries out the reaction a 3,4-dihydroxy-5-(all-trans-polyprenyl)benzoate + S-adenosyl-L-methionine = a 4-hydroxy-3-methoxy-5-(all-trans-polyprenyl)benzoate + S-adenosyl-L-homocysteine + H(+). It catalyses the reaction a 3-demethylubiquinone + S-adenosyl-L-methionine = a ubiquinone + S-adenosyl-L-homocysteine. The catalysed reaction is a 3-demethylubiquinol + S-adenosyl-L-methionine = a ubiquinol + S-adenosyl-L-homocysteine + H(+). The protein operates within cofactor biosynthesis; ubiquinone biosynthesis. In terms of biological role, O-methyltransferase required for two non-consecutive steps during ubiquinone biosynthesis. Catalyzes the 2 O-methylation of 3,4-dihydroxy-5-(all-trans-polyprenyl)benzoic acid into 4-hydroxy-3-methoxy-5-(all-trans-polyprenyl)benzoic acid. Also catalyzes the last step of ubiquinone biosynthesis by mediating methylation of 3-demethylubiquinone into ubiquinone. Also able to mediate the methylation of 3-demethylubiquinol into ubiquinol. This Candida albicans (Yeast) protein is Ubiquinone biosynthesis O-methyltransferase, mitochondrial.